We begin with the raw amino-acid sequence, 129 residues long: Small ribosomal subunit protein uS11 (129 aa).

Belongs to the universal ribosomal protein uS11 family. In terms of assembly, part of the 30S ribosomal subunit. Interacts with proteins S7 and S18. Binds to IF-3.

Its function is as follows. Located on the platform of the 30S subunit, it bridges several disparate RNA helices of the 16S rRNA. Forms part of the Shine-Dalgarno cleft in the 70S ribosome. This Caulobacter sp. (strain K31) protein is Small ribosomal subunit protein uS11.